The sequence spans 879 residues: Valine--tRNA ligase (879 aa).

The 'HIGH' region signature appears at 43-53 (PNVTGVLHMGH). The short motif at 534–538 (KMSKS) is the 'KMSKS' region element. ATP is bound at residue lysine 537. A coiled-coil region spans residues 807-878 (LGNMIDVEAE…LKESIAALKK (72 aa)).

Belongs to the class-I aminoacyl-tRNA synthetase family. ValS type 1 subfamily. In terms of assembly, monomer.

Its subcellular location is the cytoplasm. It carries out the reaction tRNA(Val) + L-valine + ATP = L-valyl-tRNA(Val) + AMP + diphosphate. In terms of biological role, catalyzes the attachment of valine to tRNA(Val). As ValRS can inadvertently accommodate and process structurally similar amino acids such as threonine, to avoid such errors, it has a 'posttransfer' editing activity that hydrolyzes mischarged Thr-tRNA(Val) in a tRNA-dependent manner. This is Valine--tRNA ligase from Bacteroides thetaiotaomicron (strain ATCC 29148 / DSM 2079 / JCM 5827 / CCUG 10774 / NCTC 10582 / VPI-5482 / E50).